The chain runs to 401 residues: MTDINTVLAELKRGTDEILSEADLIEKLKENRPLKVKLGADPTAPDIHLGHTVVLNKLRQFQQLGHEVYFLIGDFTGMVGDPSGKNATRPPLSREDVLRNAETYKEQIYKILDPQKTKIVFNSEWLSKLGTXGMIRLASNYTVARMLERDDFKKRFGNNQPIAIHEFIYPLLQGYDSVALDADVELGGTDQKFNLLVGRELQKSAGKKPQVAITLPLLVGLDGEKKMSKSLGNYIGVTEAPSDMFGKVMSISDELMWDWYNLLSFRPLNEIAQLKSEVENGKNPRDVKILLAKELIARFHNEEAANAAEQEFINRFQKGAMPDEMPEFTFSGEMGLATLLKEAGLVPSTSEAIRSAQQGGVKINGEKVDNVKDNAPKGTNVYQVGKRKFARVRLNKVDTVK.

The short motif at 42–51 (PTAPDIHLGH) is the 'HIGH' region element. Residues 226–230 (KMSKS) carry the 'KMSKS' region motif. Residue Lys229 coordinates ATP. An S4 RNA-binding domain is found at 334 to 394 (MGLATLLKEA…GKRKFARVRL (61 aa)).

It belongs to the class-I aminoacyl-tRNA synthetase family. TyrS type 2 subfamily. As to quaternary structure, homodimer.

It localises to the cytoplasm. It carries out the reaction tRNA(Tyr) + L-tyrosine + ATP = L-tyrosyl-tRNA(Tyr) + AMP + diphosphate + H(+). Catalyzes the attachment of tyrosine to tRNA(Tyr) in a two-step reaction: tyrosine is first activated by ATP to form Tyr-AMP and then transferred to the acceptor end of tRNA(Tyr). This Haemophilus influenzae (strain ATCC 51907 / DSM 11121 / KW20 / Rd) protein is Tyrosine--tRNA ligase.